The following is a 475-amino-acid chain: Fez family zinc finger protein 1 (475 aa).

The short motif at 28 to 43 is the Engrailed homology 1 repressor element; the sequence is PLAFSIERIMARTPEP. 6 consecutive C2H2-type zinc fingers follow at residues 260-282, 288-310, 316-338, 344-366, 372-394, and 400-423; these read FTCE…MPVH, FVCK…KIIH, HKCN…TRIH, FVCE…KLTH, FKCN…MHTH, and FTCP…RKLH. The disordered stretch occupies residues 425–475; sequence SSLGLTRTPTGEPSSDPPPQLQQPPPAPLPPLQPTLPPPGPLPSGLHQGHQ. Over residues 427–437 the composition is skewed to polar residues; sequence LGLTRTPTGEP. Positions 439-466 are enriched in pro residues; it reads SDPPPQLQQPPPAPLPPLQPTLPPPGPL.

This sequence belongs to the krueppel C2H2-type zinc-finger protein family.

The protein resides in the nucleus. Its function is as follows. Transcription repressor. Involved in the axonal projection and proper termination of olfactory sensory neurons (OSN). Plays a role in rostro-caudal patterning of the diencephalon and in prethalamic formation. Expression is required in OSN to cell-autonomously regulate OSN axon projections. Regulates non-cell-autonomously the layer formation of the olfactory bulb development and the interneurons. May be required for correct rostral migration of the interneuron progenitors. The chain is Fez family zinc finger protein 1 (Fezf1) from Mus musculus (Mouse).